The primary structure comprises 300 residues: 33 kDa chaperonin (300 aa).

Cystine bridges form between Cys247–Cys249 and Cys280–Cys283.

Belongs to the HSP33 family. In terms of processing, under oxidizing conditions two disulfide bonds are formed involving the reactive cysteines. Under reducing conditions zinc is bound to the reactive cysteines and the protein is inactive.

The protein localises to the cytoplasm. In terms of biological role, redox regulated molecular chaperone. Protects both thermally unfolding and oxidatively damaged proteins from irreversible aggregation. Plays an important role in the bacterial defense system toward oxidative stress. The polypeptide is 33 kDa chaperonin (Prochlorococcus marinus (strain MIT 9312)).